The following is a 303-amino-acid chain: MYIQILGSAAGGGFPQWNCNCVNCAGFRDGSLRAQARTQSSIALSDDGINWVLCNASPDIRAQLQGFAPMQPGRALRDTGISAIVLMDSQIDHTTGLLSLREGCPHQVWCTEMVHEDLSTGFPLFEMLKHWNGGLTWNRIELQGSFVIPACPNLRFTPFPLRSAAPPYSPHRFDPHPGDNIGLLVEDTRTGGKLFYAPGLGKVDEALAEKMRDADCLLVDGTMWDDDEMQRRGVGTRTGREMGHLAQNGPGGMLEVLEGFPEQRKVLIHINNTNPILDEDSPERAELVRRNVEVAFDGMSIEL.

Belongs to the PqqB family.

The protein operates within cofactor biosynthesis; pyrroloquinoline quinone biosynthesis. May be involved in the transport of PQQ or its precursor to the periplasm. This is Coenzyme PQQ synthesis protein B from Pseudomonas savastanoi pv. phaseolicola (strain 1448A / Race 6) (Pseudomonas syringae pv. phaseolicola (strain 1448A / Race 6)).